A 587-amino-acid chain; its full sequence is Nucleoporin p58/p45 (587 aa).

5 consecutive repeat copies span residues 7 to 8 (FG), 30 to 31 (FG), 44 to 45 (FG), 63 to 64 (FG), and 68 to 69 (FG). The segment at 7-567 (FGSGTLGSTT…VSNPASAGFG (561 aa)) is 14 X 2 AA repeats of F-G. Residues 196-236 (TSAASNEGLGGIDFSTSSDKKSDKTGTRPEDSKALKDENLP) form a disordered region. A compositionally biased stretch (basic and acidic residues) spans 213–234 (SDKKSDKTGTRPEDSKALKDEN). Coiled-coil stretches lie at residues 244–264 (ENLQ…SRMS) and 302–369 (ETAQ…SHIT). At T319 the chain carries Phosphothreonine. 9 consecutive repeat copies span residues 476–477 (FG), 480–481 (FG), 501–502 (FG), 507–508 (FG), 517–518 (FG), 519–520 (FG), 533–534 (FG), 556–557 (FG), and 566–567 (FG). A disordered region spans residues 565–587 (GFGTGGQLLQLKRPPAGNKRGKR).

Belongs to the NUP58 family. As to quaternary structure, component of the p62 complex, a complex at least composed of NUP62, NUP54, and NUP58. Interacts with NUTF2. Interacts with SRP1-alpha and Importin p97 proteins when they are together, but not with SRP1-alpha protein alone. Post-translationally, O-glycosylated.

The protein resides in the nucleus. It is found in the nuclear pore complex. Its subcellular location is the nucleus membrane. Component of the nuclear pore complex, a complex required for the trafficking across the nuclear membrane. This is Nucleoporin p58/p45 from Mus musculus (Mouse).